The chain runs to 400 residues: Haptoglobin (400 aa).

An N-terminal signal peptide occupies residues 1–18 (MSALPVVVTLLLCGQLLA). Sushi domains lie at 28–83 (DSCP…ECED) and 84–141 (ASCP…ECEA). Disulfide bonds link cysteine 49/cysteine 81, cysteine 105/cysteine 139, and cysteine 143/cysteine 260. The 243-residue stretch at 156–398 (IIGGSLDAKG…ILDWVRKTIA (243 aa)) folds into the Peptidase S1 domain. N-linked (GlcNAc...) asparagine glycans are attached at residues asparagine 285, asparagine 309, and asparagine 315. 2 disulfides stabilise this stretch: cysteine 303/cysteine 334 and cysteine 345/cysteine 375. The interaction with CD163 stretch occupies residues 312–317 (VPENKT).

It belongs to the peptidase S1 family. In terms of assembly, tetramer of two alpha and two beta chains; disulfide-linked. The hemoglobin/haptoglobin complex is composed of a haptoglobin dimer bound to two hemoglobin alpha-beta dimers. Interacts with CD163. Interacts with ERGIC3. In terms of tissue distribution, expressed by the liver and secreted in plasma.

It is found in the secreted. It localises to the extracellular space. Functionally, as a result of hemolysis, hemoglobin is found to accumulate in the kidney and is secreted in the urine. Haptoglobin captures, and combines with free plasma hemoglobin to allow hepatic recycling of heme iron and to prevent kidney damage. Haptoglobin also acts as an antioxidant, has antibacterial activity and plays a role in modulating many aspects of the acute phase response. Hemoglobin/haptoglobin complexes are rapidly cleared by the macrophage CD163 scavenger receptor expressed on the surface of liver Kupfer cells through an endocytic lysosomal degradation pathway. In Cervus elaphus (Red deer), this protein is Haptoglobin (HP).